The chain runs to 294 residues: Diaminopimelate epimerase (294 aa).

Substrate is bound by residues Asn11 and Asn78. The active-site Proton donor is Cys87. Residues Gly88–Asn89, Asn167, Asn203, and Glu221–Arg222 each bind substrate. The Proton acceptor role is filled by Cys230. Gly231–Thr232 is a substrate binding site.

It belongs to the diaminopimelate epimerase family. In terms of assembly, homodimer.

Its subcellular location is the cytoplasm. It catalyses the reaction (2S,6S)-2,6-diaminopimelate = meso-2,6-diaminopimelate. The protein operates within amino-acid biosynthesis; L-lysine biosynthesis via DAP pathway; DL-2,6-diaminopimelate from LL-2,6-diaminopimelate: step 1/1. Functionally, catalyzes the stereoinversion of LL-2,6-diaminopimelate (L,L-DAP) to meso-diaminopimelate (meso-DAP), a precursor of L-lysine and an essential component of the bacterial peptidoglycan. The polypeptide is Diaminopimelate epimerase (Mycobacterium avium (strain 104)).